We begin with the raw amino-acid sequence, 460 residues long: Heme sensor protein HssS (460 aa).

2 helical membrane-spanning segments follow: residues 11–31 (IYTI…TNII) and 164–184 (IFLA…VISS). Positions 186–238 (YAIIKPIQQLKRATERLMHGNFDEVIHVTRKDEFGTLQYRFDKMRLSLKQLDD) constitute an HAMP domain. One can recognise a Histidine kinase domain in the interval 246–456 (NVSHEIKTPL…TFTITFKKVP (211 aa)). At histidine 249 the chain carries Phosphohistidine; by autocatalysis.

In terms of processing, autophosphorylated.

It localises to the cell membrane. The enzyme catalyses ATP + protein L-histidine = ADP + protein N-phospho-L-histidine.. Functionally, member of the two-component regulatory system HssS/HssR involved in intracellular heme homeostasis and tempering of staphylococcal virulence. HssS functions as a heme sensor histidine kinase which is autophosphorylated at a histidine residue and transfers its phosphate group to an aspartate residue of HssR. HssR/HssS activates the expression of hrtAB, an efflux pump, in response to extracellular heme, hemin, hemoglobin or blood. In Staphylococcus saprophyticus subsp. saprophyticus (strain ATCC 15305 / DSM 20229 / NCIMB 8711 / NCTC 7292 / S-41), this protein is Heme sensor protein HssS (hssS).